The chain runs to 135 residues: Probable disulfide formation protein (135 aa).

A helical transmembrane segment spans residues 7 to 26 (SYCLYFAWLVSCIGTLMSVY). A disulfide bridge connects residues C36 and C39. The next 2 helical transmembrane spans lie at 41–60 (YQRICLFPLVVILGISAYLD) and 67–84 (YALPLALIGFCIAIYQVC). A disulfide bridge links C96 with C101. Residues 109-131 (GFITMPMASALAFFAIANLLIFA) form a helical membrane-spanning segment.

Belongs to the DsbB family. BdbC subfamily.

It localises to the cell inner membrane. Its function is as follows. Required for disulfide bond formation in some proteins. The chain is Probable disulfide formation protein from Chlamydia muridarum (strain MoPn / Nigg).